Here is a 480-residue protein sequence, read N- to C-terminus: Probable pectin lyase F-2 (480 aa).

An N-terminal signal peptide occupies residues 1-25; the sequence is MTLIRTVLMAAALLGASAHAQGVVG. C83 and C106 form a disulfide bridge. N111 carries an N-linked (GlcNAc...) asparagine glycan. R256 is an active-site residue. C322 and C330 form a disulfide bridge. Residues 386-401 show a composition bias toward low complexity; the sequence is SSSAIPSSTPAPSSSA. The segment at 386-436 is disordered; the sequence is SSSAIPSSTPAPSSSALAKRHGGHDRHGLGHIPHLTEGGPGAWHTPGPAPS.

The protein belongs to the polysaccharide lyase 1 family.

It localises to the secreted. The enzyme catalyses Eliminative cleavage of (1-&gt;4)-alpha-D-galacturonan methyl ester to give oligosaccharides with 4-deoxy-6-O-methyl-alpha-D-galact-4-enuronosyl groups at their non-reducing ends.. Functionally, pectinolytic enzymes consist of four classes of enzymes: pectin lyase, polygalacturonase, pectin methylesterase and rhamnogalacturonase. Among pectinolytic enzymes, pectin lyase is the most important in depolymerization of pectin, since it cleaves internal glycosidic bonds of highly methylated pectins. In Aspergillus terreus (strain NIH 2624 / FGSC A1156), this protein is Probable pectin lyase F-2 (pelF-2).